We begin with the raw amino-acid sequence, 531 residues long: MKTLVYKEIKEKLGRDFILENPKNKNLAHFATPLAFSLAKELKQNPMIIANDIVVKLKDCDCFESVEALNGYVNFKLSKAFLNSLATQALSDSENFAKDDKKEQSFLLEYVSANPTGPLHIGHARGAIFGDTLTRVARHLGYKFDTEYYVNDAGNQIYLLGLSILLAVKEHCLKEQVQYPDEYYKGEYIIDVAKEAFAEFEKDFFVEENIPQLALWAKDKMLKIIKQNLADAKIFIDAYVSETSYYSELENTLKALKEHGGTYEQDGKIWLASSVKGDEKDRVIIKDDGKGTYLAADIVYHKDKMSRGYDKCINIWGADHHGYIARMKAAMEFLGHDSQNLEIILAQMVSLLKNGEPYKMSKRAGNFILMGDVLEELGSDVLRYIFISKKCDTHLEFDVDEFKKEDSSNPVYYINYAHARIHQVFAKAGKSVDDVMYAKFESLNEDGMNLLFESLNLKAVLNDAFESRSLQKIPDYLKNLASLFHKFYNENKVVGSDNEDEFLKLFAICALSIKIAFALMGIEAKNKMNHD.

The short motif at 113 to 123 (ANPTGPLHIGH) is the 'HIGH' region element.

This sequence belongs to the class-I aminoacyl-tRNA synthetase family. As to quaternary structure, monomer.

Its subcellular location is the cytoplasm. The catalysed reaction is tRNA(Arg) + L-arginine + ATP = L-arginyl-tRNA(Arg) + AMP + diphosphate. This Campylobacter lari (strain RM2100 / D67 / ATCC BAA-1060) protein is Arginine--tRNA ligase.